Consider the following 842-residue polypeptide: Xyloglucanase Xgh74A (842 aa).

The N-terminal stretch at 1 to 32 is a signal peptide; it reads MVKKFTSKIKAAVFAAVVAATAIFGPAISSQA. Asp70 acts as the Nucleophile in catalysis. BNR repeat units follow at residues 134–144, 185–196, 252–262, and 358–368; these read RSTDRGETWEK, WRSTDYGVTWSK, YRSTDGGVTWK, and FRSTDGGATWK. Residue Asp480 is the Proton donor of the active site. BNR repeat units follow at residues 533-541, 577-586, 616-626, 660-671, and 708-718; these read FSYDGGRNW, VTTDNGNSWK, YISTDGGLTFT, WRSTDGGYTFEK, and FRSDDAGKTWV. One can recognise a Dockerin domain in the interval 771–841; that stretch reads DKGLVGDLNG…LLQAIPELPK (71 aa).

The protein belongs to the glycosyl hydrolase 74 family.

Functionally, hydrolyzes the glucosidic bonds of unbranched Glc residues in tamarind seed xyloglucan, producing XXXG, XLXG, XXLG and XLLG. Has low activity on carboxymethylcellulose, lichenan,hydroxyethylcellulose and glucuronoxylan, and no activity on xylan, polygalaturonic acid, wheat arabinoxylan, rhamnogalacturan, curdlan, laminarin, galactomannan, galactan, arabinan and pachyman or amorphous cellulose. In Acetivibrio thermocellus (strain ATCC 27405 / DSM 1237 / JCM 9322 / NBRC 103400 / NCIMB 10682 / NRRL B-4536 / VPI 7372) (Clostridium thermocellum), this protein is Xyloglucanase Xgh74A.